A 231-amino-acid chain; its full sequence is MKEITINIDKIKINDDWKEFLRDEFQKKYFLEIKKQYLNAINQNIIIYPPANLIFNAFNLCPLKEIKIVILGQDPYHQENQAMGLSFSVPKNVKIPPSLNNIFKELQNDLNITPAKSGDLSFWAKQGVLLLNSILSVEANKAASHSSWGWQEFSDAVIHKLSNEKSGLVFMLWGNYAKSKEILIDNTKHLILKAAHPSPLARTGFLGCKHFSKANEFLKKVGKIPIDWKIV.

The Proton acceptor role is filled by Asp-74.

Belongs to the uracil-DNA glycosylase (UDG) superfamily. UNG family.

It localises to the cytoplasm. The catalysed reaction is Hydrolyzes single-stranded DNA or mismatched double-stranded DNA and polynucleotides, releasing free uracil.. Functionally, excises uracil residues from the DNA which can arise as a result of misincorporation of dUMP residues by DNA polymerase or due to deamination of cytosine. This Campylobacter jejuni subsp. doylei (strain ATCC BAA-1458 / RM4099 / 269.97) protein is Uracil-DNA glycosylase.